The chain runs to 141 residues: Nucleoside diphosphate kinase (141 aa).

The ATP site is built by K11, F59, R87, T93, R104, and N114. H117 functions as the Pros-phosphohistidine intermediate in the catalytic mechanism.

This sequence belongs to the NDK family. In terms of assembly, homotetramer. It depends on Mg(2+) as a cofactor.

The protein resides in the cytoplasm. The catalysed reaction is a 2'-deoxyribonucleoside 5'-diphosphate + ATP = a 2'-deoxyribonucleoside 5'-triphosphate + ADP. It carries out the reaction a ribonucleoside 5'-diphosphate + ATP = a ribonucleoside 5'-triphosphate + ADP. Functionally, major role in the synthesis of nucleoside triphosphates other than ATP. The ATP gamma phosphate is transferred to the NDP beta phosphate via a ping-pong mechanism, using a phosphorylated active-site intermediate. This chain is Nucleoside diphosphate kinase, found in Paracidovorax citrulli (strain AAC00-1) (Acidovorax citrulli).